The sequence spans 612 residues: UvrABC system protein C (612 aa).

In terms of domain architecture, GIY-YIG spans Thr-20–Ile-98. Residues Ser-208–Leu-243 enclose the UVR domain.

Belongs to the UvrC family. In terms of assembly, interacts with UvrB in an incision complex.

The protein resides in the cytoplasm. Its function is as follows. The UvrABC repair system catalyzes the recognition and processing of DNA lesions. UvrC both incises the 5' and 3' sides of the lesion. The N-terminal half is responsible for the 3' incision and the C-terminal half is responsible for the 5' incision. This is UvrABC system protein C from Francisella tularensis subsp. tularensis (strain FSC 198).